The sequence spans 396 residues: Ribosomal RNA large subunit methyltransferase I (396 aa).

Residues 2 to 81 form the PUA domain; sequence TVSIYLAKGR…EAIDKDFFVR (80 aa).

Belongs to the methyltransferase superfamily. RlmI family.

It localises to the cytoplasm. The enzyme catalyses cytidine(1962) in 23S rRNA + S-adenosyl-L-methionine = 5-methylcytidine(1962) in 23S rRNA + S-adenosyl-L-homocysteine + H(+). In terms of biological role, specifically methylates the cytosine at position 1962 (m5C1962) of 23S rRNA. This is Ribosomal RNA large subunit methyltransferase I from Aliivibrio fischeri (strain MJ11) (Vibrio fischeri).